We begin with the raw amino-acid sequence, 242 residues long: 1-(5-phosphoribosyl)-5-[(5-phosphoribosylamino)methylideneamino] imidazole-4-carboxamide isomerase (242 aa).

The Proton acceptor role is filled by D10. The active-site Proton donor is the D132.

This sequence belongs to the HisA/HisF family.

It is found in the cytoplasm. The enzyme catalyses 1-(5-phospho-beta-D-ribosyl)-5-[(5-phospho-beta-D-ribosylamino)methylideneamino]imidazole-4-carboxamide = 5-[(5-phospho-1-deoxy-D-ribulos-1-ylimino)methylamino]-1-(5-phospho-beta-D-ribosyl)imidazole-4-carboxamide. It participates in amino-acid biosynthesis; L-histidine biosynthesis; L-histidine from 5-phospho-alpha-D-ribose 1-diphosphate: step 4/9. This chain is 1-(5-phosphoribosyl)-5-[(5-phosphoribosylamino)methylideneamino] imidazole-4-carboxamide isomerase, found in Methanothrix thermoacetophila (strain DSM 6194 / JCM 14653 / NBRC 101360 / PT) (Methanosaeta thermophila).